Here is a 491-residue protein sequence, read N- to C-terminus: Chromosomal replication initiator protein DnaA (491 aa).

Residues 1-69 (MTTWDKCLKK…TIQECHGNDL (69 aa)) form a domain I, interacts with DnaA modulators region. Positions 69–154 (LIIEYSNKKF…KEDEEYSFGL (86 aa)) are domain II. The domain III, AAA+ region stretch occupies residues 155–371 (PLKEKYVFDS…GALNRVLTTS (217 aa)). 4 residues coordinate ATP: G199, G201, K202, and T203. A domain IV, binds dsDNA region spans residues 372-491 (KFNHKDPTIE…YELLLNKISR (120 aa)).

Belongs to the DnaA family. In terms of assembly, oligomerizes as a right-handed, spiral filament on DNA at oriC.

Its subcellular location is the cytoplasm. Plays an essential role in the initiation and regulation of chromosomal replication. ATP-DnaA binds to the origin of replication (oriC) to initiate formation of the DNA replication initiation complex once per cell cycle. Binds the DnaA box (a 9 base pair repeat at the origin) and separates the double-stranded (ds)DNA. Forms a right-handed helical filament on oriC DNA; dsDNA binds to the exterior of the filament while single-stranded (ss)DNA is stabiized in the filament's interior. The ATP-DnaA-oriC complex binds and stabilizes one strand of the AT-rich DNA unwinding element (DUE), permitting loading of DNA polymerase. After initiation quickly degrades to an ADP-DnaA complex that is not apt for DNA replication. Binds acidic phospholipids. The chain is Chromosomal replication initiator protein DnaA from Francisella tularensis subsp. tularensis (strain WY96-3418).